A 244-amino-acid polypeptide reads, in one-letter code: Orotidine 5'-phosphate decarboxylase (244 aa).

Residues Asp-12, Lys-34, 61 to 70 (DLKLFDIPNT), Thr-125, Arg-187, Gln-196, Gly-216, and Arg-217 contribute to the substrate site. Lys-63 (proton donor) is an active-site residue.

Belongs to the OMP decarboxylase family. Type 1 subfamily. Homodimer.

The catalysed reaction is orotidine 5'-phosphate + H(+) = UMP + CO2. The protein operates within pyrimidine metabolism; UMP biosynthesis via de novo pathway; UMP from orotate: step 2/2. In terms of biological role, catalyzes the decarboxylation of orotidine 5'-monophosphate (OMP) to uridine 5'-monophosphate (UMP). This is Orotidine 5'-phosphate decarboxylase from Dictyoglomus thermophilum (strain ATCC 35947 / DSM 3960 / H-6-12).